A 339-amino-acid polypeptide reads, in one-letter code: Putative agmatine deiminase (339 aa).

Cys-331 functions as the Amidino-cysteine intermediate in the catalytic mechanism.

This sequence belongs to the agmatine deiminase family.

It carries out the reaction agmatine + H2O = N-carbamoylputrescine + NH4(+). This chain is Putative agmatine deiminase, found in Streptomyces coelicolor (strain ATCC BAA-471 / A3(2) / M145).